The following is a 357-amino-acid chain: Protein-glutamate methylesterase/protein-glutamine glutaminase 1 (357 aa).

One can recognise a Response regulatory domain in the interval 7–124; that stretch reads KVLCVDDSAL…REGLLDYTQT (118 aa). The residue at position 58 (Asp58) is a 4-aspartylphosphate. In terms of domain architecture, CheB-type methylesterase spans 158 to 350; that stretch reads LLSTEKLIIV…QRVMAHLATF (193 aa). Catalysis depends on residues Ser170, His196, and Asp292.

Belongs to the CheB family. In terms of processing, phosphorylated by CheA. Phosphorylation of the N-terminal regulatory domain activates the methylesterase activity.

Its subcellular location is the cytoplasm. It carries out the reaction [protein]-L-glutamate 5-O-methyl ester + H2O = L-glutamyl-[protein] + methanol + H(+). The catalysed reaction is L-glutaminyl-[protein] + H2O = L-glutamyl-[protein] + NH4(+). Functionally, involved in chemotaxis. Part of a chemotaxis signal transduction system that modulates chemotaxis in response to various stimuli. Catalyzes the demethylation of specific methylglutamate residues introduced into the chemoreceptors (methyl-accepting chemotaxis proteins or MCP) by CheR. Also mediates the irreversible deamidation of specific glutamine residues to glutamic acid. The polypeptide is Protein-glutamate methylesterase/protein-glutamine glutaminase 1 (Cupriavidus metallidurans (strain ATCC 43123 / DSM 2839 / NBRC 102507 / CH34) (Ralstonia metallidurans)).